The primary structure comprises 355 residues: UDP-glucose 4-epimerase uge1 (355 aa).

8–39 lines the NAD(+) pocket; that stretch reads TVLVTGGAGYIGSHTCVVLLEKGYDVVIVDNL.

It belongs to the NAD(P)-dependent epimerase/dehydratase family. NAD(+) serves as cofactor.

It catalyses the reaction UDP-alpha-D-glucose = UDP-alpha-D-galactose. The protein operates within carbohydrate metabolism; galactose metabolism. In terms of biological role, major UDP-glucose/-galactose 4-epimerase under glucose-rich conditions involved in protein galactosylation. The chain is UDP-glucose 4-epimerase uge1 (uge1) from Schizosaccharomyces pombe (strain 972 / ATCC 24843) (Fission yeast).